Reading from the N-terminus, the 236-residue chain is MPISVDKAVIARLKTHGETFEILVDPYLARDFKEGKDVPIEEILATPYVFKDAHKGDKASEHEMEKIFGTSDPYEVAKIILRKGEVQLTAEQRRQMLEDKKRYIATVIHRHAVDPRTGYPHPVDRILRAMEEAGVHIDIFKDAEAQVPQVIKAIRPILPLKLEVKVIAVKIPGDYVGRAYGEVRKFGNIKREEWGSDGSWMFVIEIPGGVEEEFYEKLNALTKGEAITKLLERKGL.

It belongs to the SDO1/SBDS family. Crystallized in association with 70S ribosomes.

The polypeptide is Ribosome maturation protein SDO1 homolog (Thermococcus kodakarensis (strain ATCC BAA-918 / JCM 12380 / KOD1) (Pyrococcus kodakaraensis (strain KOD1))).